Consider the following 554-residue polypeptide: Undecaprenyl phosphate-alpha-4-amino-4-deoxy-L-arabinose arabinosyl transferase (554 aa).

Helical transmembrane passes span 4–24, 87–107, 115–135, 178–198, 206–226, 262–282, 293–313, 315–335, 351–371, 384–404, and 414–434; these read LKDS…LLPV, FGSI…ATLL, VLAT…TYAV, FMTK…PIVI, LVVF…PWAL, YLPI…GALF, ELFF…VAKG, LPTY…AYAT, VINL…GLGL, QKVW…FITL, and AAAC…QQVV.

This sequence belongs to the glycosyltransferase 83 family.

It localises to the cell inner membrane. The enzyme catalyses 4-amino-4-deoxy-alpha-L-arabinopyranosyl di-trans,octa-cis-undecaprenyl phosphate + lipid IVA = lipid IIA + di-trans,octa-cis-undecaprenyl phosphate.. The protein operates within lipopolysaccharide metabolism; 4-amino-4-deoxy-beta-L-arabinose-lipid A biosynthesis. Its function is as follows. Catalyzes the transfer of the L-Ara4N moiety of the glycolipid undecaprenyl phosphate-alpha-L-Ara4N to lipid A. The modified arabinose is attached to lipid A and is required for resistance to polymyxin and cationic antimicrobial peptides. The polypeptide is Undecaprenyl phosphate-alpha-4-amino-4-deoxy-L-arabinose arabinosyl transferase (Yersinia pseudotuberculosis serotype O:3 (strain YPIII)).